Consider the following 524-residue polypeptide: 2-isopropylmalate synthase (524 aa).

The Pyruvate carboxyltransferase domain maps to 12-274; it reads VIIFDTTLRD…WNRIETTMLT (263 aa). The Mn(2+) site is built by aspartate 21, histidine 209, histidine 211, and asparagine 245. Residues 398-524 are regulatory domain; sequence KLMSLTVIAG…EDAPTVAVAG (127 aa).

It belongs to the alpha-IPM synthase/homocitrate synthase family. LeuA type 1 subfamily. In terms of assembly, homodimer. Mn(2+) serves as cofactor.

It is found in the cytoplasm. It carries out the reaction 3-methyl-2-oxobutanoate + acetyl-CoA + H2O = (2S)-2-isopropylmalate + CoA + H(+). It functions in the pathway amino-acid biosynthesis; L-leucine biosynthesis; L-leucine from 3-methyl-2-oxobutanoate: step 1/4. Its function is as follows. Catalyzes the condensation of the acetyl group of acetyl-CoA with 3-methyl-2-oxobutanoate (2-ketoisovalerate) to form 3-carboxy-3-hydroxy-4-methylpentanoate (2-isopropylmalate). The polypeptide is 2-isopropylmalate synthase (Rhodopseudomonas palustris (strain TIE-1)).